The sequence spans 111 residues: Small ribosomal subunit protein bS6 (111 aa).

Belongs to the bacterial ribosomal protein bS6 family.

Its function is as follows. Binds together with bS18 to 16S ribosomal RNA. The sequence is that of Small ribosomal subunit protein bS6 from Francisella philomiragia subsp. philomiragia (strain ATCC 25017 / CCUG 19701 / FSC 153 / O#319-036).